We begin with the raw amino-acid sequence, 167 residues long: Lipoprotein signal peptidase (167 aa).

4 helical membrane-spanning segments follow: residues 8 to 28 (TFLT…VVLL), 46 to 66 (WGHF…FGLF), 70 to 90 (KIPL…FLGI), and 101 to 121 (IALT…LFHG). Active-site residues include Asp-125 and Asp-143. The helical transmembrane segment at 139-159 (FNLADAFISLGTLLLVGHLYF) threads the bilayer.

This sequence belongs to the peptidase A8 family.

The protein localises to the cell inner membrane. It catalyses the reaction Release of signal peptides from bacterial membrane prolipoproteins. Hydrolyzes -Xaa-Yaa-Zaa-|-(S,diacylglyceryl)Cys-, in which Xaa is hydrophobic (preferably Leu), and Yaa (Ala or Ser) and Zaa (Gly or Ala) have small, neutral side chains.. It participates in protein modification; lipoprotein biosynthesis (signal peptide cleavage). Its function is as follows. This protein specifically catalyzes the removal of signal peptides from prolipoproteins. This Chlamydia muridarum (strain MoPn / Nigg) protein is Lipoprotein signal peptidase.